A 158-amino-acid polypeptide reads, in one-letter code: UPF0178 protein Rpal_2485 (158 aa).

The protein belongs to the UPF0178 family.

This chain is UPF0178 protein Rpal_2485, found in Rhodopseudomonas palustris (strain TIE-1).